A 304-amino-acid chain; its full sequence is MYYGFDMGGTKIELGVFDENLQRIWHKRVPTPREDYPQLLQILRDLTEEADTYCGVQGSVGIGIPGLPNADDGTVFTANVPSAMGQPLQADLSRLIQREVRIDNDANCFALSEAWDPEFRTYPTVLGLILGTGVGGGLIVNGSIVSGRNHITGEFGHFRLPVDALDILGADIPHVPCGCGHRGCIENYISGRGFEWMYSHFYQHTLPATDIIAHYAAGEPKAVAHVERFMDVLAVCLGNLLTMLDPHLVVVGGGLSNFEKIYQELPKRLPAHLLRVARLPRIEKARYGDSGGVRGAAFLHLAEK.

Residues 4–11 (GFDMGGTK) and 133–140 (GVGGGLIV) each bind ATP. Positions 157, 177, 179, and 184 each coordinate Zn(2+).

This sequence belongs to the ROK (NagC/XylR) family. NagK subfamily.

The enzyme catalyses N-acetyl-D-glucosamine + ATP = N-acetyl-D-glucosamine 6-phosphate + ADP + H(+). It participates in cell wall biogenesis; peptidoglycan recycling. Its function is as follows. Catalyzes the phosphorylation of N-acetyl-D-glucosamine (GlcNAc) derived from cell-wall degradation, yielding GlcNAc-6-P. In Yersinia pseudotuberculosis serotype O:1b (strain IP 31758), this protein is N-acetyl-D-glucosamine kinase.